Here is a 114-residue protein sequence, read N- to C-terminus: Protein ORF3 (114 aa).

2 hydrophobic regions span residues 6-22 and 33-53; these read CALGLFCCCSSCFCLCC and AVVGGAAAVPAVVSGVTGLIL. The interaction with host HPX stretch occupies residues 28 to 68; the sequence is VSRLAAVVGGAAAVPAVVSGVTGLILSPSQSPIFIQPTPSP. Positions 48–72 are interaction with the capsid protein; the sequence is VTGLILSPSQSPIFIQPTPSPPMSP. Phosphoserine; by host is present on S71. A homodimerization, and interaction with host AMBP/bikunin region spans residues 72–114; that stretch reads PLRPGLDLVFANPPDHSAPLGVTRPSAPPLPHVVDLPQLGPRR. Positions 91-114 are disordered; that stretch reads LGVTRPSAPPLPHVVDLPQLGPRR. The segment at 95–104 is interaction with host SRC, HCK, FYN, PIK3R3 and GRB2; it reads RPSAPPLPHV. The PTAP/PSAP motif signature appears at 96-99; it reads PSAP.

This sequence belongs to the hepevirus ORF3 protein family. As to quaternary structure, forms homooligomers. Interacts with host SRC, HCK, FYN, PIK3R3 and GRB2 (via SH3 domain); binding does not activate the kinases. Interacts with host AMBP/bikunin and AMBP/alpha-1-microglobulin peptides. Interacts with host HPX/hemopexin. Interacts (when phosphorylated) with capsid protein ORF2. Interacts with host TSG101; this interaction plays a role in viral release from the host cell. Interacts with host SIRPA; this interaction down-regulates the phosphorylation of host IRF3. In terms of processing, palmitoylated in the N-terminus.

The protein resides in the host endoplasmic reticulum membrane. Its subcellular location is the host cytoplasm. The protein localises to the host cytoskeleton. It is found in the virion. It localises to the host cell membrane. Functionally, small multifunctional phosphoprotein involved in virion morphogenesis, egress and counteracting host innate immunity. Plays critical roles in the final steps of viral release by interacting with host TSG101, a member of the vacuolar protein-sorting pathway and using other cellular host proteins involved in vesicle formation pathway. Also acts as a viroporin and forms ion conductive pores allowing viral particle release. Impairs the generation of type I interferon by down-regulating host TLR3 and TLR7 as well as their downstream signaling pathways. Down-regulates the phosphorylation of host IRF3 via the interaction with host SIRP-alpha, thereby inhibiting IFN-I expression. Interacts with host microtubules. In Hepatitis E virus genotype 1 (isolate Human/Burma) (HEV-1), this protein is Protein ORF3.